The primary structure comprises 237 residues: Ras-related protein Rab-23 (237 aa).

Position 19 (Ala19) interacts with GDP. Val20, Gly21, Lys22, Ser23, and Ser24 together coordinate GTP. Residues Gly21, Lys22, Ser23, Ser24, and Asp37 each coordinate GDP. Ser23 serves as a coordination point for Mg(2+). The short motif at 28–46 (RYCKGIFTKDYKKTIGVDF) is the Switch 1 element. Tyr38 provides a ligand contact to GTP. Lys40 is a binding site for GDP. Thr41 contacts GTP. Mg(2+) is bound by residues Thr41 and Asp64. The Switch 2 signature appears at 65-84 (TAGQEEFDAITKAYYRGAQA). Gly67, Asn121, Lys122, Asp124, Ser151, Val152, and Lys153 together coordinate GTP. GDP is bound by residues Asn121, Lys122, and Asp124. GDP-binding residues include Val152 and Lys153. Phosphoserine is present on residues Ser186 and Ser187. Residues 204–237 (QNSSSLNGGDVINLRPNKQRTKRTRNPFSSCSVP) form a disordered region. Cys234 is modified (cysteine methyl ester). Cys234 is lipidated: S-geranylgeranyl cysteine. A propeptide spans 235–237 (SVP) (removed in mature form).

This sequence belongs to the small GTPase superfamily. Rab family. Interacts with SUFU. Mg(2+) is required as a cofactor. Detected in brain neurons (at protein level). Forebrain and midbrain.

The protein localises to the cell membrane. Its subcellular location is the cytoplasm. It localises to the endosome membrane. It is found in the cytoplasmic vesicle. The protein resides in the autophagosome. The protein localises to the phagosome. Its subcellular location is the phagosome membrane. The catalysed reaction is GTP + H2O = GDP + phosphate + H(+). Regulated by guanine nucleotide exchange factors (GEFs) which promote the exchange of bound GDP for free GTP. Regulated by GTPase activating proteins (GAPs) which increase the GTP hydrolysis activity. Inhibited by GDP dissociation inhibitors (GDIs). Functionally, the small GTPases Rab are key regulators of intracellular membrane trafficking, from the formation of transport vesicles to their fusion with membranes. Rabs cycle between an inactive GDP-bound form and an active GTP-bound form that is able to recruit to membranes different set of downstream effectors directly responsible for vesicle formation, movement, tethering and fusion. Plays a role in autophagic vacuole assembly, and mediates defense against pathogens, such as S.aureus, by promoting their capture by autophagosomes that then merge with lysosomes. Together with SUFU, prevents nuclear import of GLI1, and thereby inhibits GLI1 transcription factor activity. Regulates GLI1 in differentiating chondrocytes. Likewise, regulates GLI3 proteolytic processing and modulates GLI2 and GLI3 transcription factor activity. This Mus musculus (Mouse) protein is Ras-related protein Rab-23.